Reading from the N-terminus, the 234-residue chain is Large ribosomal subunit protein uL1 (234 aa).

Belongs to the universal ribosomal protein uL1 family. In terms of assembly, part of the 50S ribosomal subunit.

Its function is as follows. Binds directly to 23S rRNA. The L1 stalk is quite mobile in the ribosome, and is involved in E site tRNA release. Functionally, protein L1 is also a translational repressor protein, it controls the translation of the L11 operon by binding to its mRNA. The sequence is that of Large ribosomal subunit protein uL1 from Campylobacter fetus subsp. fetus (strain 82-40).